The primary structure comprises 129 residues: Small ribosomal subunit protein uS11 (129 aa).

The protein belongs to the universal ribosomal protein uS11 family. As to quaternary structure, part of the 30S ribosomal subunit. Interacts with proteins S7 and S18. Binds to IF-3.

Functionally, located on the platform of the 30S subunit, it bridges several disparate RNA helices of the 16S rRNA. Forms part of the Shine-Dalgarno cleft in the 70S ribosome. In Bacillus cereus (strain ATCC 14579 / DSM 31 / CCUG 7414 / JCM 2152 / NBRC 15305 / NCIMB 9373 / NCTC 2599 / NRRL B-3711), this protein is Small ribosomal subunit protein uS11.